The primary structure comprises 104 residues: UPF0473 protein SH1304 (104 aa).

This sequence belongs to the UPF0473 family.

In Staphylococcus haemolyticus (strain JCSC1435), this protein is UPF0473 protein SH1304.